Consider the following 225-residue polypeptide: MGHKVNPIGLRLGVNRTWDSRWYAGQDYARLLHEDLKLRAFLRRKLSGAGVSRVVIERPAKKPRVTIYAARPGVVIGKKGQDIDALRKELSRMAKTDVALNIVEIRKPEIDATLVAENIAQQLERRVAFRRAMKRAIQSAMRLGAQGIRITCGGRLGGAEIARAEKYREGRVPLHTLRADIDYGTATAKTTYGTCGVKVWIFKGEILAHDPLAQDRRAAEQAPQR.

The KH type-2 domain occupies 38–106 (LRAFLRRKLS…DVALNIVEIR (69 aa)).

Belongs to the universal ribosomal protein uS3 family. Part of the 30S ribosomal subunit. Forms a tight complex with proteins S10 and S14.

Functionally, binds the lower part of the 30S subunit head. Binds mRNA in the 70S ribosome, positioning it for translation. The chain is Small ribosomal subunit protein uS3 from Gluconobacter oxydans (strain 621H) (Gluconobacter suboxydans).